The chain runs to 721 residues: Protein mu-NS (721 aa).

Positions 1-13 (MASFKGFSANTVP) are interaction with sigma-NS. The segment at 1 to 38 (MASFKGFSANTVPVSKTRKDTSSLTATPGLRAPSMSSP) is RNA-binding. The tract at residues 14–40 (VSKTRKDTSSLTATPGLRAPSMSSPVD) is interaction with mu-2. The tract at residues 17–37 (TRKDTSSLTATPGLRAPSMSS) is disordered. Positions 471–721 (QSDTVDGIKL…IDFSVPADEL (251 aa)) are involved in the formation of factory-like inclusions. 2 coiled-coil regions span residues 523 to 556 (LLSQ…ADVK) and 632 to 686 (KQAH…NQRQ).

The protein belongs to the orthoreovirus mu-NS protein family. As to quaternary structure, interacts with mu-2. Interacts with sigma-NS; in viral factories. Interacts with the inner capsid proteins lambda-1 and sigma-2, and outer capsid protein lambda-2; in viral factories. The N-terminus is blocked.

The protein localises to the host cytoplasm. Functionally, non-structural protein implicated with protein sigma-NS in forming the matrix of viral factories, which are large inclusions in the host cytoplasm where replication intermediates are assembled and viral RNA replication takes place. Together with mu-2, recruits the other core proteins to these factories. The sequence is that of Protein mu-NS (M3) from Mammalia (T2J).